Reading from the N-terminus, the 183-residue chain is Ras-related protein Rap-2c (183 aa).

10 to 17 (GSGGVGKS) is a GTP binding site. The Effector region motif lies at 32–40 (YDPTIEDFY). Residues 57 to 61 (DTAGT) and 116 to 119 (NKVD) contribute to the GTP site. S-palmitoyl cysteine attachment occurs at residues Cys-176 and Cys-177. A Cysteine methyl ester modification is found at Cys-180. Cys-180 is lipidated: S-geranylgeranyl cysteine. Residues 181–183 (VVQ) constitute a propeptide, removed in mature form.

This sequence belongs to the small GTPase superfamily. Ras family. Palmitoylated. Palmitoylation is required for association with recycling endosome membranes and activation of TNIK.

It localises to the cytoplasm. The protein localises to the recycling endosome membrane. The catalysed reaction is GTP + H2O = GDP + phosphate + H(+). In terms of biological role, small GTP-binding protein which cycles between a GDP-bound inactive and a GTP-bound active form. May play a role in cytoskeletal rearrangements and regulate cell spreading through activation of the effector TNIK. May play a role in SRE-mediated gene transcription. This is Ras-related protein Rap-2c (RAP2C) from Bos taurus (Bovine).